Here is a 589-residue protein sequence, read N- to C-terminus: Aspartate--tRNA(Asp/Asn) ligase (589 aa).

Glu172 contributes to the L-aspartate binding site. The tract at residues 196–199 (QLFK) is aspartate. Arg218 lines the L-aspartate pocket. Residues 218–220 (RDE) and Gln227 contribute to the ATP site. His449 provides a ligand contact to L-aspartate. An ATP-binding site is contributed by Glu483. Residue Arg490 coordinates L-aspartate. 535-538 (GVDR) lines the ATP pocket.

It belongs to the class-II aminoacyl-tRNA synthetase family. Type 1 subfamily. In terms of assembly, homodimer.

The protein resides in the cytoplasm. It carries out the reaction tRNA(Asx) + L-aspartate + ATP = L-aspartyl-tRNA(Asx) + AMP + diphosphate. Its function is as follows. Aspartyl-tRNA synthetase with relaxed tRNA specificity since it is able to aspartylate not only its cognate tRNA(Asp) but also tRNA(Asn). Reaction proceeds in two steps: L-aspartate is first activated by ATP to form Asp-AMP and then transferred to the acceptor end of tRNA(Asp/Asn). This chain is Aspartate--tRNA(Asp/Asn) ligase, found in Francisella philomiragia subsp. philomiragia (strain ATCC 25017 / CCUG 19701 / FSC 153 / O#319-036).